The sequence spans 208 residues: Redox-sensing transcriptional repressor Rex (208 aa).

Residues 18 to 57 (IYYRYFKLLETDGIERIKSEQLAKLVAIPSATIRRDFSYI) constitute a DNA-binding region (H-T-H motif). 92–97 (GVGNLG) contributes to the NAD(+) binding site.

This sequence belongs to the transcriptional regulatory Rex family. Homodimer.

It is found in the cytoplasm. In terms of biological role, modulates transcription in response to changes in cellular NADH/NAD(+) redox state. This Latilactobacillus sakei subsp. sakei (strain 23K) (Lactobacillus sakei subsp. sakei) protein is Redox-sensing transcriptional repressor Rex.